The following is a 179-amino-acid chain: Adenine phosphoribosyltransferase (179 aa).

Belongs to the purine/pyrimidine phosphoribosyltransferase family. Homodimer.

It localises to the cytoplasm. The enzyme catalyses AMP + diphosphate = 5-phospho-alpha-D-ribose 1-diphosphate + adenine. The protein operates within purine metabolism; AMP biosynthesis via salvage pathway; AMP from adenine: step 1/1. In terms of biological role, catalyzes a salvage reaction resulting in the formation of AMP, that is energically less costly than de novo synthesis. In Ruegeria pomeroyi (strain ATCC 700808 / DSM 15171 / DSS-3) (Silicibacter pomeroyi), this protein is Adenine phosphoribosyltransferase.